The sequence spans 91 residues: MKLAVTLTLVTLALCCSSASAEICPSFQRVIETLLMDTPSSYEAAMELFSPDQDMREAGAQLKKLVDTLPQKPRESIIKLMEKIAQSSLCN.

An N-terminal signal peptide occupies residues 1 to 21 (MKLAVTLTLVTLALCCSSASA).

It belongs to the secretoglobin family. As to quaternary structure, antiparallel homodimer; disulfide-linked. Interaction with LMBR1L has been observed in PubMed:16423471, but not in PubMed:23964685. In terms of tissue distribution, club cells (nonciliated cells of the surface epithelium of the pulmonary airways).

The protein localises to the secreted. In terms of biological role, binds phosphatidylcholine, phosphatidylinositol, polychlorinated biphenyls (PCB) and weakly progesterone, potent inhibitor of phospholipase A2. This is Uteroglobin (SCGB1A1) from Homo sapiens (Human).